Reading from the N-terminus, the 317-residue chain is Lipoyl synthase (317 aa).

Positions 59, 64, 70, 85, 89, 92, and 298 each coordinate [4Fe-4S] cluster. The Radical SAM core domain maps to 71–287; that stretch reads WSQRHASFMI…AKIGKAKGFL (217 aa).

Belongs to the radical SAM superfamily. Lipoyl synthase family. The cofactor is [4Fe-4S] cluster.

Its subcellular location is the cytoplasm. It carries out the reaction [[Fe-S] cluster scaffold protein carrying a second [4Fe-4S](2+) cluster] + N(6)-octanoyl-L-lysyl-[protein] + 2 oxidized [2Fe-2S]-[ferredoxin] + 2 S-adenosyl-L-methionine + 4 H(+) = [[Fe-S] cluster scaffold protein] + N(6)-[(R)-dihydrolipoyl]-L-lysyl-[protein] + 4 Fe(3+) + 2 hydrogen sulfide + 2 5'-deoxyadenosine + 2 L-methionine + 2 reduced [2Fe-2S]-[ferredoxin]. Its pathway is protein modification; protein lipoylation via endogenous pathway; protein N(6)-(lipoyl)lysine from octanoyl-[acyl-carrier-protein]: step 2/2. Functionally, catalyzes the radical-mediated insertion of two sulfur atoms into the C-6 and C-8 positions of the octanoyl moiety bound to the lipoyl domains of lipoate-dependent enzymes, thereby converting the octanoylated domains into lipoylated derivatives. The chain is Lipoyl synthase from Bartonella bacilliformis (strain ATCC 35685 / KC583 / Herrer 020/F12,63).